The sequence spans 172 residues: Secretory-abundant heat soluble protein 64681 (172 aa).

A signal peptide spans 1 to 19 (MSRTIVALILLGLAALAAA). Residues 30 to 59 (EWAGKAWLGKWVSTDRSENWDAFVEALGLP) are SAHS-c1. Residues 74-102 (WKEGDHYHHQIIIADKSYKQDIQFKLGEE) are SAHS-c2. N-linked (GlcNAc...) asparagine glycans are attached at residues N108 and N133. Positions 115-164 (KYTEVGDNLQNEVKIPSKNKTISDSYVVKGDELEKTYKINDVVAKRWYKK) are SAHS-c3.

It belongs to the Secretory-abundant heat soluble protein (SAHS) family.

The protein localises to the secreted. Secreted heat soluble protein acting as a molecular shield in water-deficient condition. Tardigrade-specific intrinsically disordered proteins (TDPs) are essential for desiccation tolerance by forming non-crystalline amorphous solids upon desiccation, and this vitrified state mirrors their protective capabilities. This chain is Secretory-abundant heat soluble protein 64681, found in Hypsibius exemplaris (Freshwater tardigrade).